The following is a 2393-amino-acid chain: Leucine-rich repeat serine/threonine-protein kinase 1 (2393 aa).

10 ANK repeats span residues 56-86, 90-120, 123-152, 197-226, 230-259, 264-293, 317-347, 361-390, 407-437, and 439-464; these read HGRT…SLNL, RGKT…PMKS, EGHC…KESE, EDET…HLLQ, SKDT…QLVK, EGST…PSEF, ECRT…SIDG, RGRT…DVNL, IGSG…DTDN, and ALRL…FADP. 5 LRR repeats span residues 532–553, 555–576, 580–600, 604–625, and 627–648; these read AITR…LFQM, SLRS…TYYI, SLEI…QFLS, QLQQ…IWLC, and ALKE…ARAS. Residues 649–675 are disordered; the sequence is RGERPRLNNSNNNFNTQSPTQESNPIV. LRR repeat units lie at residues 718–739, 742–763, and 765–787; these read TLTT…LACT, RLLI…ACVP, and HLRT…SPLH. The tract at residues 797–844 is disordered; sequence TSNGSMLPKRRNSPARQHRSRSKSAVRSQRSLSVSRHHALIDPQKEEE. Positions 804-820 are enriched in basic residues; it reads PKRRNSPARQHRSRSKS. Positions 821 to 830 are enriched in polar residues; that stretch reads AVRSQRSLSV. Positions 835-844 are enriched in basic and acidic residues; that stretch reads ALIDPQKEEE. LRR repeat units lie at residues 856 to 877, 883 to 905, 906 to 928, and 930 to 952; these read WLKT…NAAS, ALNV…ARLT, LLSM…YGML, and RLWS…VNVE. Positions 969–1167 constitute a Roc domain; sequence ESKTYHHLRL…NTIYRTAWEV (199 aa). GTP contacts are provided by residues 982–989, 1040–1044, and 1098–1101; these read GSDGVGKS, DFGGQ, and TNLD. The COR domain occupies 1233–1422; it reads FYAACTFLHD…GFWSRLVTRI (190 aa). Disordered regions lie at residues 1361–1382 and 1596–1633; these read CPSP…TDQN and RNGS…RTTG. 2 stretches are compositionally biased toward polar residues: residues 1366–1382 and 1620–1633; these read GSPT…TDQN and ITSS…RTTG. Residues 1694-1992 form the Protein kinase domain; sequence LKRSRMLGRG…LVGFCAAPEF (299 aa). Residues 1700–1708 and K1726 each bind ATP; that span reads LGRGAFGFV. Residue D1847 is the Proton acceptor of the active site.

It belongs to the protein kinase superfamily. TKL Ser/Thr protein kinase family. ROCO subfamily. The cofactor is Mg(2+). It depends on Mn(2+) as a cofactor. In terms of tissue distribution, expressed in cell bodies, but not in dendritic or axonal processes, of adult head neurons. Also present in non-neuronal tissues, such as the body wall musculature and the epithelial cells of the nematode vulva.

It localises to the golgi apparatus. The catalysed reaction is L-seryl-[protein] + ATP = O-phospho-L-seryl-[protein] + ADP + H(+). It carries out the reaction L-threonyl-[protein] + ATP = O-phospho-L-threonyl-[protein] + ADP + H(+). Functionally, determines polarized sorting of synaptic vesicle (SV) proteins to the axons by excluding SV proteins from the dendrite-specific transport machinery in the Golgi. Role in stress response. Appears to antagonize the effects of pink-1 both in the regulation of axon guidance and stress response. The polypeptide is Leucine-rich repeat serine/threonine-protein kinase 1 (lrk-1) (Caenorhabditis elegans).